The primary structure comprises 211 residues: Transcription factor bHLH150 (211 aa).

Residues M1 to P15 show a composition bias toward polar residues. The tract at residues M1–I23 is disordered. Residues A135–L184 enclose the bHLH domain.

In terms of assembly, homodimer. Interacts with PRE3 and ASK7. Post-translationally, phosphorylated by ASK7.

The protein resides in the nucleus. Its function is as follows. Atypical bHLH transcription factor probably unable to bind DNA. Negatively regulates brassinosteroid signaling. This chain is Transcription factor bHLH150 (BHLH150), found in Arabidopsis thaliana (Mouse-ear cress).